Here is a 104-residue protein sequence, read N- to C-terminus: Type VII secretion system extracellular protein B (104 aa).

Belongs to the WXG100 family. In terms of assembly, homodimer. When mixed with EsxA does not form heterodimers.

It localises to the secreted. Functionally, virulence factor that is important for the establishment of infection in the host. EsxB is required for EsxA synthesis as well as secretion. Mediates together with EsxA the release of S.aureus from the host cell. Also inhibits host cytokine production and thus modulates dendritic cell-mediated immunity. This is Type VII secretion system extracellular protein B from Staphylococcus aureus (strain MSSA476).